We begin with the raw amino-acid sequence, 622 residues long: Type 2 DNA topoisomerase 6 subunit B (622 aa).

Residues Asn48, Asp80, 101-102 (SR), 111-118 (GQQGIGIS), and Lys435 contribute to the ATP site.

The protein belongs to the TOP6B family. Homodimer. Heterotetramer of two Top6A and two Top6B chains.

It carries out the reaction ATP-dependent breakage, passage and rejoining of double-stranded DNA.. Functionally, relaxes both positive and negative superturns and exhibits a strong decatenase activity. The protein is Type 2 DNA topoisomerase 6 subunit B of Methanococcoides burtonii (strain DSM 6242 / NBRC 107633 / OCM 468 / ACE-M).